The primary structure comprises 246 residues: Thaumatin-like protein 1 (246 aa).

The first 24 residues, Met1–Ala24, serve as a signal peptide directing secretion. 8 cysteine pairs are disulfide-bonded: Cys33/Cys245, Cys81/Cys91, Cys96/Cys103, Cys151/Cys234, Cys156/Cys217, Cys164/Cys180, Cys184/Cys193, and Cys194/Cys204.

The protein belongs to the thaumatin family. In terms of tissue distribution, equally expressed in the abscission zone and surrounding tissues of both fruitlets and leaves.

The protein localises to the secreted. Its function is as follows. May be involved in protecting plant tissues from pathogen infection. The protein is Thaumatin-like protein 1 of Prunus persica (Peach).